A 122-amino-acid polypeptide reads, in one-letter code: Large ribosomal subunit protein uL14 (122 aa).

Belongs to the universal ribosomal protein uL14 family. Part of the 50S ribosomal subunit. Forms a cluster with proteins L3 and L19. In the 70S ribosome, L14 and L19 interact and together make contacts with the 16S rRNA in bridges B5 and B8.

In terms of biological role, binds to 23S rRNA. Forms part of two intersubunit bridges in the 70S ribosome. The sequence is that of Large ribosomal subunit protein uL14 from Afipia carboxidovorans (strain ATCC 49405 / DSM 1227 / KCTC 32145 / OM5) (Oligotropha carboxidovorans).